We begin with the raw amino-acid sequence, 930 residues long: Pyruvate dehydrogenase E1 component (930 aa).

Residues 1–10 (MTTDFARHDL) show a composition bias toward basic and acidic residues. Residues 1 to 21 (MTTDFARHDLAQNSNSASEPD) are disordered. Residue Lys-375 forms an Isoglutamyl lysine isopeptide (Lys-Gln) (interchain with Q-Cter in protein Pup) linkage.

Homodimer. Part of the PDH complex, consisting of multiple copies of AceE (E1), DlaT (E2) and Lpd (E3). The cofactor is Mg(2+). It depends on thiamine diphosphate as a cofactor.

The catalysed reaction is N(6)-[(R)-lipoyl]-L-lysyl-[protein] + pyruvate + H(+) = N(6)-[(R)-S(8)-acetyldihydrolipoyl]-L-lysyl-[protein] + CO2. Its function is as follows. Component of the pyruvate dehydrogenase (PDH) complex, that catalyzes the overall conversion of pyruvate to acetyl-CoA and CO(2). AceE has reductase activity with pyruvate but does not react with 2-oxoglutarate. The protein is Pyruvate dehydrogenase E1 component (aceE) of Mycobacterium tuberculosis (strain ATCC 25618 / H37Rv).